A 280-amino-acid polypeptide reads, in one-letter code: Tumor necrosis factor ligand superfamily member 6 (280 aa).

At 1-80 (MQQPLNYPYP…KTRRDHNTGL (80 aa)) the chain is on the cytoplasmic side. Positions 20 to 71 (SSPWGPPGSVLPCPSSVPGRPGQRRPPPPPPPTLPPPPPPPPLPPLPLPPLK) are disordered. The span at 43–69 (RRPPPPPPPTLPPPPPPPPLPPLPLPP) shows a compositional bias: pro residues. The chain crosses the membrane as a helical; Signal-anchor for type II membrane protein span at residues 81-101 (CLLVMFFMVLVALVGLGLGMF). Residues 102-280 (QLFHLQKELA…SKTFFGLYKL (179 aa)) are Extracellular-facing. In terms of domain architecture, THD spans 144-280 (KVAHLTGKPN…SKTFFGLYKL (137 aa)). Asn-183 carries N-linked (GlcNAc...) asparagine glycosylation. A disulfide bond links Cys-201 and Cys-232. Residues Asn-249 and Asn-259 are each glycosylated (N-linked (GlcNAc...) asparagine).

Belongs to the tumor necrosis factor family. As to quaternary structure, homotrimer. Interacts with ARHGAP9, BAIAP2L1, BTK, CACNB3, CACNB4, CRK, DLG2, DNMBP, DOCK4, EPS8L3, FGR, FYB1, FYN, HCK, ITK, ITSN2, KALRN, LYN, MACC1, MIA, MPP4, MYO15A, NCF1, NCK1, NCK2, NCKIPSD, OSTF1, PIK3R1, PSTPIP1, RIMBP3C, SAMSN1, SH3GL3, SH3PXD2B, SH3PXD2A, SH3RF2, SKAP2, SNX33, SNX9, SORBS3, SPTA1, SRC, SRGAP1, SRGAP2, SRGAP3, TEC, TJP3 and YES1. In terms of processing, the soluble form derives from the membrane form by proteolytic processing. The membrane-bound form undergoes two successive intramembrane proteolytic cleavages. The first one is processed by ADAM10 producing an N-terminal fragment, which lacks the receptor-binding extracellular domain. This ADAM10-processed FasL (FasL APL) remnant form is still membrane anchored and further processed by SPPL2A that liberates the FasL intracellular domain (FasL ICD). FasL shedding by ADAM10 is a prerequisite for subsequent intramembrane cleavage by SPPL2A in T-cells. Phosphorylated by FGR on tyrosine residues; this is required for ubiquitination and subsequent internalization. Post-translationally, N-glycosylated. Glycosylation enhances apoptotic activity. In terms of processing, monoubiquitinated.

It is found in the cell membrane. It localises to the cytoplasmic vesicle lumen. The protein resides in the lysosome lumen. The protein localises to the secreted. Its subcellular location is the nucleus. Cytokine that binds to TNFRSF6/FAS, a receptor that transduces the apoptotic signal into cells. Involved in cytotoxic T-cell-mediated apoptosis, natural killer cell-mediated apoptosis and in T-cell development. Initiates fratricidal/suicidal activation-induced cell death (AICD) in antigen-activated T-cells contributing to the termination of immune responses. TNFRSF6/FAS-mediated apoptosis has also a role in the induction of peripheral tolerance. Binds to TNFRSF6B/DcR3, a decoy receptor that blocks apoptosis. Functionally, induces FAS-mediated activation of NF-kappa-B, initiating non-apoptotic signaling pathways. Can induce apoptosis but does not appear to be essential for this process. Its function is as follows. Cytoplasmic form induces gene transcription inhibition. This chain is Tumor necrosis factor ligand superfamily member 6 (FASLG), found in Felis catus (Cat).